A 162-amino-acid chain; its full sequence is Universal stress protein MJ0577 (162 aa).

ATP contacts are provided by residues Pro11, Val41, 127 to 133, and 141 to 143; these read GSHGKTN and SVT.

Belongs to the universal stress protein A family. In terms of assembly, homodimer. The cofactor is Mn(2+).

It is found in the cytoplasm. The chain is Universal stress protein MJ0577 from Methanocaldococcus jannaschii (strain ATCC 43067 / DSM 2661 / JAL-1 / JCM 10045 / NBRC 100440) (Methanococcus jannaschii).